Consider the following 334-residue polypeptide: Glycerol-3-phosphate dehydrogenase [NAD(P)+] (334 aa).

NADPH is bound by residues S14, Y15, H35, and K109. Sn-glycerol 3-phosphate is bound by residues K109, G138, and T140. A142 lines the NADPH pocket. Positions 194, 247, 257, 258, and 259 each coordinate sn-glycerol 3-phosphate. Residue K194 is the Proton acceptor of the active site. R258 is a binding site for NADPH. V282 and E284 together coordinate NADPH.

The protein belongs to the NAD-dependent glycerol-3-phosphate dehydrogenase family.

Its subcellular location is the cytoplasm. It carries out the reaction sn-glycerol 3-phosphate + NAD(+) = dihydroxyacetone phosphate + NADH + H(+). The catalysed reaction is sn-glycerol 3-phosphate + NADP(+) = dihydroxyacetone phosphate + NADPH + H(+). It participates in membrane lipid metabolism; glycerophospholipid metabolism. Catalyzes the reduction of the glycolytic intermediate dihydroxyacetone phosphate (DHAP) to sn-glycerol 3-phosphate (G3P), the key precursor for phospholipid synthesis. In Psychromonas ingrahamii (strain DSM 17664 / CCUG 51855 / 37), this protein is Glycerol-3-phosphate dehydrogenase [NAD(P)+].